Reading from the N-terminus, the 726-residue chain is Catalase-peroxidase (726 aa).

Residues 1–33 (MSTSDDIHNTTATGKCPFHQGGHDQSAGAGTTT) are disordered. The segment at residues 105-226 (WHGAGTYRSI…LGATEMGLIY (122 aa)) is a cross-link (tryptophyl-tyrosyl-methioninium (Trp-Tyr) (with M-252)). Catalysis depends on His-106, which acts as the Proton acceptor. Residues 226–252 (YVNPEGPDHSGEPLSAAAAIRATFGNM) constitute a cross-link (tryptophyl-tyrosyl-methioninium (Tyr-Met) (with W-105)). Heme b is bound at residue His-267.

It belongs to the peroxidase family. Peroxidase/catalase subfamily. In terms of assembly, homodimer or homotetramer. Heme b is required as a cofactor. Formation of the three residue Trp-Tyr-Met cross-link is important for the catalase, but not the peroxidase activity of the enzyme.

It carries out the reaction H2O2 + AH2 = A + 2 H2O. The catalysed reaction is 2 H2O2 = O2 + 2 H2O. Bifunctional enzyme with both catalase and broad-spectrum peroxidase activity. In Shigella sonnei (strain Ss046), this protein is Catalase-peroxidase.